The primary structure comprises 947 residues: MTPLSSPLRQYWQTVVERLPEGFTETSLSAQAKSVLTFSDFALDSVIAHPEWLAELESASPQADEWRHYAGWLQEALADVCDDASLMRELRLFRRRIMVRIAWAQALSRVEDETILQQLSHLAETLIVGARDWLYAACCREWGTPCNPQGVPQPLLILGMGKLGGGELNFSSDIDLIFAWPEHGTTQGGRRELDNAQFFTRLGQRLIKALDQPTMDGFVYRVDMRLRPFGDSGPLVLSFAALEDYYQEQGRDWERYAMVKARIMGDNNDAWSRELRAMLRPFVFRRYIDFSVIQSLRNMKGMIAREVRRRGLKDNIKLGAGGIREIEFIVQVFQLIRGGREPSLQSRSLLPTLNAITALHLLPENDVTQLRAAYLFLRRLENLLQSINDEQTQTLPADDLNRARLAWGMNTDNWPQLVGKLTEHMANVRRVFNELIGDDEADTPQEEELSEPWREVWQDTLQEGDSTPVLAHLADEDRRQLLTLIADFRKELDKRPIGPRGRQVLDQLMPRLLDDVCSREDAAVTLSRITPLLAGIVTRTTYLELLSEFPGALKHLIMLCAASPMIASQLARYPLLLDELLDPGTLYQPTATNAYRDELRQYLLRVPEEDEEQQLEALRQFKQAQLLRIAAADIAGTLSVMKVSDHLTWLAEAMIDAVVQQAWMQMVARYGQPTHLDERQGRGFAVVGYGKLGGWELGYSSDLDLIFLHDCPIDVMTNGEREIDGRQFYLRLAQRIMHLFSTRTSSGILYEVDARLRPSGAAGMLVTSADAFADYQQHEAWTWEHQALVRARVVYGDPQLTSQFDAVRRTIMTTARDGKTLQTEVREMREKMRSHLGNKHRDRFDIKADEGGITDIEFIAQYLVLRYAHEKPKLTRWSDNVRILELLAQNGIMDEHEAQALTVAYTTLRDELHHLALQELPGHVAQTCFSKERALVQASWRKWLVAV.

An adenylyl removase region spans residues 1-440; the sequence is MTPLSSPLRQ…VFNELIGDDE (440 aa). The adenylyl transferase stretch occupies residues 450 to 947; sequence SEPWREVWQD…ASWRKWLVAV (498 aa).

It belongs to the GlnE family. The cofactor is Mg(2+).

It catalyses the reaction [glutamine synthetase]-O(4)-(5'-adenylyl)-L-tyrosine + phosphate = [glutamine synthetase]-L-tyrosine + ADP. The enzyme catalyses [glutamine synthetase]-L-tyrosine + ATP = [glutamine synthetase]-O(4)-(5'-adenylyl)-L-tyrosine + diphosphate. Functionally, involved in the regulation of glutamine synthetase GlnA, a key enzyme in the process to assimilate ammonia. When cellular nitrogen levels are high, the C-terminal adenylyl transferase (AT) inactivates GlnA by covalent transfer of an adenylyl group from ATP to specific tyrosine residue of GlnA, thus reducing its activity. Conversely, when nitrogen levels are low, the N-terminal adenylyl removase (AR) activates GlnA by removing the adenylyl group by phosphorolysis, increasing its activity. The regulatory region of GlnE binds the signal transduction protein PII (GlnB) which indicates the nitrogen status of the cell. In Salmonella arizonae (strain ATCC BAA-731 / CDC346-86 / RSK2980), this protein is Bifunctional glutamine synthetase adenylyltransferase/adenylyl-removing enzyme.